Consider the following 1323-residue polypeptide: Nck-associated protein 5-like (1323 aa).

Disordered regions lie at residues 1 to 22, 113 to 142, 156 to 175, 204 to 238, 260 to 314, and 341 to 714; these read MDQP…DSME, QIPL…TSLP, QQLR…ALDA, PATP…PWAP, PGEE…DTLL, and GATG…EQPE. Residues 1 to 135 are mediates interaction with CDK5RAP2 and is required for homodimerization and microtubule bundle formation; it reads MDQPAGGTGK…PTSPAPNVSE (135 aa). The stretch at 22–109 forms a coiled coil; the sequence is ELSTCQELLH…LQQKLQLTAN (88 aa). Pro residues-rich tracts occupy residues 162–172 and 226–236; these read GPGPPATPPPA and CGPPQPEPSPW. The segment covering 271-298 has biased composition (low complexity); it reads ASSRAPPSAQGPSSGPHCAPGSSSSSSS. The segment covering 353-364 has biased composition (pro residues); that stretch reads PGKPNSPDPGPP. Ser436, Ser447, Ser466, and Ser473 each carry phosphoserine; by CDK1. The short motif at 480–483 is the (S/T)X(I/L)P motif 1 element; sequence SRIP. 3 positions are modified to phosphoserine: Ser489, Ser492, and Ser494. Residues 531 to 542 are compositionally biased toward polar residues; it reads LRPSQSTVSTAL. Ser573 is subject to Phosphoserine; by CDK1. Basic and acidic residues predominate over residues 647–660; it reads RPGDPSHTPLRDRL. Residue Thr654 is modified to Phosphothreonine. The segment at 743–1136 is mediates interaction with beta-tubulin and is required for microtubule bundle formation; it reads RVYSSHSMGA…SGTPSKNLPK (394 aa). Ser760 is subject to Phosphoserine; by CDK1. Disordered stretches follow at residues 778–875, 892–948, 979–1003, and 1027–1323; these read ALCP…HSAI, GQER…EVKT, AYLS…GQAQ, and KELP…GSQG. The segment covering 799-817 has biased composition (low complexity); it reads KPKSPHSSPTKLPSKSPTK. The (S/T)X(I/L)P motif 2 signature appears at 808–811; it reads TKLP. Residues 918 to 921 carry the (S/T)X(I/L)P motif 3; required for interaction with MAPRE1 motif; sequence SKLP. Residues 925–934 are compositionally biased toward basic and acidic residues; sequence RRTEATKNKD. Positions 942–985 form a coiled coil; the sequence is LRKEVKTEARKLEAESLNISKLMAKAEDLRRALEEEKAYLSRAR. Over residues 1027-1041 the composition is skewed to basic and acidic residues; the sequence is KELPPKSWREPKPEY. Polar residues-rich tracts occupy residues 1097–1112 and 1124–1136; these read VSTT…TRTL and HSSS…NLPK. A compositionally biased stretch (pro residues) spans 1143 to 1153; it reads DPPPGAPPARP. The residue at position 1184 (Ser1184) is a Phosphoserine. Polar residues-rich tracts occupy residues 1225-1237 and 1264-1273; these read TFPN…SSSD and VDPSRTSTPQ. Over residues 1302–1323 the composition is skewed to low complexity; sequence LETSESLSDSLYDSLSSCGSQG.

As to quaternary structure, homodimer. Interacts with CDK5RAP2. Interacts with MAPRE1. Interacts with beta-tubulin. CDK1/Cyclin B-dependent phosphorylation mediates its dissociation from centrosomes during mitosis.

It localises to the cytoplasm. It is found in the cytoskeleton. The protein resides in the microtubule organizing center. The protein localises to the centrosome. Regulates microtubule organization and stabilization. Promotes microtubule growth and bundling formation and stabilizes microtubules by increasing intense acetylation of microtubules. Both tubulin-binding and homodimer formation are required for NCKAP5L-mediated microtubule bundle formation. This is Nck-associated protein 5-like (Nckap5l) from Mus musculus (Mouse).